The chain runs to 124 residues: Salivary protein 15 Iric-3 (124 aa).

The signal sequence occupies residues 1–22 (MESFVAMKVVCIILLFVIAAEA). N-linked (GlcNAc...) asparagine glycosylation is found at Asn82 and Asn93. Residues 105 to 124 (GPNNQTCHKKDECVGYIPGC) are CD4-binding.

It belongs to the salp15 family. In terms of assembly, interacts with host CD4. Interacts with host DC-SIGN (CD209). Interacts with Borrelia outer surface protein C (OspC). As to expression, expressed in salivary glands. Detected in fed adult female.

The protein localises to the secreted. Functionally, salivary tick protein that downregulates host immune system by binding to both dendritic cells, and CD4(+) T cells. Specifically binds to the CD4 coreceptor on T cells. This interaction prevents the activation of the Src kinase, Lck, and its downstream substrate Zap-70, and results in deficient activation of PLCgamma1, the repression of calcium fluxes triggered by T-cell antigen receptor (TCR) ligation, and a subsequent reduction in interleukin-2 production. This salivary protein also binds to DC-SIGN (CD209) on dendritic cells (DC) and activates the Raf-1 kinase/MEK signaling pathway that results in down-regulating expression of pro-inflammatory cytokines. Furthermore, it inhibits T cell proliferation induced by DCs. In addition, it inhibits in vitro keratinocyte inflammation induced by Borrelia burgdorferi or by the major outer surface protein (OspC) of Borrelia. In addition, it downregulates chemokines and monocyte chemoattractant protein 1, as well as several antimicrobial peptides such as defensins, cathelicidin, psoriasin, and RNase 7. Apart from its immunomodulatory activities, it is also associated with protection of Borrelia spirochetes from antibody-mediated killing through its binding to OspC. In vivo, tests on different immune disease animal models show promising therapeutic results, e.g., in inhibiting HIV infection, experimental autoimmune encephalomyelitis, transplantation rejection, and asthma. In Ixodes ricinus (Common tick), this protein is Salivary protein 15 Iric-3.